A 22-amino-acid polypeptide reads, in one-letter code: thr operon leader peptide (22 aa).

Belongs to the thr operon leader peptide family.

Functionally, this protein is involved in control of the biosynthesis of threonine. This is thr operon leader peptide from Klebsiella pneumoniae (strain 342).